The sequence spans 323 residues: Methionyl-tRNA formyltransferase (323 aa).

117-120 (SLLP) is a (6S)-5,6,7,8-tetrahydrofolate binding site.

Belongs to the Fmt family.

The enzyme catalyses L-methionyl-tRNA(fMet) + (6R)-10-formyltetrahydrofolate = N-formyl-L-methionyl-tRNA(fMet) + (6S)-5,6,7,8-tetrahydrofolate + H(+). Functionally, attaches a formyl group to the free amino group of methionyl-tRNA(fMet). The formyl group appears to play a dual role in the initiator identity of N-formylmethionyl-tRNA by promoting its recognition by IF2 and preventing the misappropriation of this tRNA by the elongation apparatus. The protein is Methionyl-tRNA formyltransferase of Acidovorax ebreus (strain TPSY) (Diaphorobacter sp. (strain TPSY)).